The sequence spans 51 residues: Cytochrome bd ubiquinol oxidase subunit X (51 aa).

At 1 to 3 (MWY) the chain is on the cytoplasmic side. A helical membrane pass occupies residues 4–26 (FSWLLGLPLAAAFAVLNAMWYEL). At 27–51 (MDDRARKRLAADPTAELALEGNKHH) the chain is on the periplasmic side.

The protein belongs to the cytochrome ubiquinol oxidase subunit X family. In terms of assembly, may be a subunit of cytochrome ubiquinol oxidase.

Its subcellular location is the cell inner membrane. It carries out the reaction 2 a ubiquinol + O2(in) + 4 H(+)(in) = 2 a ubiquinone + 2 H2O(in) + 4 H(+)(out). It functions in the pathway energy metabolism; oxidative phosphorylation. Functionally, required for correct functioning of cytochrome bd oxidase. This Brucella abortus (strain 2308) protein is Cytochrome bd ubiquinol oxidase subunit X (cydX).